Reading from the N-terminus, the 361-residue chain is POU domain, class 3, transcription factor 4 (361 aa).

Disordered stretches follow at residues proline 99–leucine 131 and methionine 144–aspartate 192. Residues alanine 119 to leucine 131 are compositionally biased toward polar residues. The segment covering valine 165–histidine 183 has biased composition (basic and acidic residues). A POU-specific domain is found at glutamate 186–aspartate 260. Residue serine 265 is modified to Phosphoserine. The homeobox DNA-binding region spans lysine 278–threonine 337. A disordered region spans residues lysine 334 to leucine 361. Residues glutamine 343 to leucine 361 show a composition bias toward basic and acidic residues.

Belongs to the POU transcription factor family. Class-3 subfamily. As to quaternary structure, interacts with HNRNPU. Brain specific.

It is found in the nucleus. Its function is as follows. Probable transcription factor which exert its primary action widely during early neural development and in a very limited set of neurons in the mature brain. This is POU domain, class 3, transcription factor 4 (Pou3f4) from Mus musculus (Mouse).